A 343-amino-acid polypeptide reads, in one-letter code: tRNA N6-adenosine threonylcarbamoyltransferase (343 aa).

Residues histidine 120 and histidine 124 each coordinate Fe cation. Substrate is bound by residues 142 to 146, aspartate 175, glycine 188, aspartate 192, and asparagine 281; that span reads VVSGG. Aspartate 309 contributes to the Fe cation binding site.

The protein belongs to the KAE1 / TsaD family. Fe(2+) is required as a cofactor.

The protein localises to the cytoplasm. It carries out the reaction L-threonylcarbamoyladenylate + adenosine(37) in tRNA = N(6)-L-threonylcarbamoyladenosine(37) in tRNA + AMP + H(+). Required for the formation of a threonylcarbamoyl group on adenosine at position 37 (t(6)A37) in tRNAs that read codons beginning with adenine. Is involved in the transfer of the threonylcarbamoyl moiety of threonylcarbamoyl-AMP (TC-AMP) to the N6 group of A37, together with TsaE and TsaB. TsaD likely plays a direct catalytic role in this reaction. The chain is tRNA N6-adenosine threonylcarbamoyltransferase from Halalkalibacterium halodurans (strain ATCC BAA-125 / DSM 18197 / FERM 7344 / JCM 9153 / C-125) (Bacillus halodurans).